The primary structure comprises 59 residues: uncharacterized protein (59 aa).

Composition is skewed to basic and acidic residues over residues 1–23 (MAEHRGGSGNFAEDREKASDAGR) and 36–45 (DPQRASEAGK). A disordered region spans residues 1–59 (MAEHRGGSGNFAEDREKASDAGRKGGQHSGGNFKNDPQRASEAGKKGGQQSGGNKSGKS). Residues 46–59 (KGGQQSGGNKSGKS) are compositionally biased toward gly residues.

The protein belongs to the con-10 family.

This is an uncharacterized protein from Escherichia coli (strain K12).